The chain runs to 342 residues: Dihydroorotase (342 aa).

Residues H13 and H15 each coordinate Zn(2+). Residues H15–R17 and N41 contribute to the substrate site. K98, H135, and H173 together coordinate Zn(2+). An N6-carboxylysine modification is found at K98. Position 135 (H135) interacts with substrate. Position 218 (L218) interacts with substrate. D246 contributes to the Zn(2+) binding site. The active site involves D246. The substrate site is built by H250 and A262.

Belongs to the metallo-dependent hydrolases superfamily. DHOase family. Class II DHOase subfamily. In terms of assembly, homodimer. Zn(2+) is required as a cofactor.

It carries out the reaction (S)-dihydroorotate + H2O = N-carbamoyl-L-aspartate + H(+). The protein operates within pyrimidine metabolism; UMP biosynthesis via de novo pathway; (S)-dihydroorotate from bicarbonate: step 3/3. In terms of biological role, catalyzes the reversible cyclization of carbamoyl aspartate to dihydroorotate. The protein is Dihydroorotase of Aliivibrio fischeri (strain ATCC 700601 / ES114) (Vibrio fischeri).